Reading from the N-terminus, the 450-residue chain is Phosphoglucosamine mutase (450 aa).

The active-site Phosphoserine intermediate is the Ser101. Residues Ser101, Asp240, Asp242, and Asp244 each coordinate Mg(2+). A Phosphoserine modification is found at Ser101.

This sequence belongs to the phosphohexose mutase family. Mg(2+) serves as cofactor. Activated by phosphorylation.

It catalyses the reaction alpha-D-glucosamine 1-phosphate = D-glucosamine 6-phosphate. In terms of biological role, catalyzes the conversion of glucosamine-6-phosphate to glucosamine-1-phosphate. The sequence is that of Phosphoglucosamine mutase from Streptococcus pneumoniae serotype 4 (strain ATCC BAA-334 / TIGR4).